The chain runs to 134 residues: Small ribosomal subunit protein uS12 (134 aa).

The segment at 1–26 (MPTTQQLLRKGRTTLQKKSKVPALKG) is disordered. Basic residues predominate over residues 9 to 20 (RKGRTTLQKKSK). Asp-89 bears the 3-methylthioaspartic acid mark. The segment at 103 to 134 (DTQGVKDRNKSRSKYGTKKPKAGAAAAGAKKK) is disordered. Positions 113–123 (SRSKYGTKKPK) are enriched in basic residues. Residues 124–134 (AGAAAAGAKKK) show a composition bias toward low complexity.

It belongs to the universal ribosomal protein uS12 family. As to quaternary structure, part of the 30S ribosomal subunit. Contacts proteins S8 and S17. May interact with IF1 in the 30S initiation complex.

In terms of biological role, with S4 and S5 plays an important role in translational accuracy. Its function is as follows. Interacts with and stabilizes bases of the 16S rRNA that are involved in tRNA selection in the A site and with the mRNA backbone. Located at the interface of the 30S and 50S subunits, it traverses the body of the 30S subunit contacting proteins on the other side and probably holding the rRNA structure together. The combined cluster of proteins S8, S12 and S17 appears to hold together the shoulder and platform of the 30S subunit. This is Small ribosomal subunit protein uS12 from Deinococcus geothermalis (strain DSM 11300 / CIP 105573 / AG-3a).